Consider the following 185-residue polypeptide: Mu-like prophage FluMu protein gp16 (185 aa).

To phage Mu protein gp16.

The sequence is that of Mu-like prophage FluMu protein gp16 from Haemophilus influenzae (strain ATCC 51907 / DSM 11121 / KW20 / Rd).